The following is a 130-amino-acid chain: Large ribosomal subunit protein bL20 (130 aa).

This sequence belongs to the bacterial ribosomal protein bL20 family.

Binds directly to 23S ribosomal RNA and is necessary for the in vitro assembly process of the 50S ribosomal subunit. It is not involved in the protein synthesizing functions of that subunit. In Clavibacter sepedonicus (Clavibacter michiganensis subsp. sepedonicus), this protein is Large ribosomal subunit protein bL20.